Reading from the N-terminus, the 371-residue chain is Queuine tRNA-ribosyltransferase (371 aa).

Aspartate 90 serves as the catalytic Proton acceptor. Substrate contacts are provided by residues 90–94 (DSGGF), aspartate 144, glutamine 188, and glycine 215. Residues 246-252 (GVGTPED) are RNA binding. Aspartate 265 acts as the Nucleophile in catalysis. Positions 270–274 (TRNAR) are RNA binding; important for wobble base 34 recognition. The Zn(2+) site is built by cysteine 303, cysteine 305, cysteine 308, and histidine 334.

The protein belongs to the queuine tRNA-ribosyltransferase family. Homodimer. Within each dimer, one monomer is responsible for RNA recognition and catalysis, while the other monomer binds to the replacement base PreQ1. Requires Zn(2+) as cofactor.

It catalyses the reaction 7-aminomethyl-7-carbaguanine + guanosine(34) in tRNA = 7-aminomethyl-7-carbaguanosine(34) in tRNA + guanine. It participates in tRNA modification; tRNA-queuosine biosynthesis. Functionally, catalyzes the base-exchange of a guanine (G) residue with the queuine precursor 7-aminomethyl-7-deazaguanine (PreQ1) at position 34 (anticodon wobble position) in tRNAs with GU(N) anticodons (tRNA-Asp, -Asn, -His and -Tyr). Catalysis occurs through a double-displacement mechanism. The nucleophile active site attacks the C1' of nucleotide 34 to detach the guanine base from the RNA, forming a covalent enzyme-RNA intermediate. The proton acceptor active site deprotonates the incoming PreQ1, allowing a nucleophilic attack on the C1' of the ribose to form the product. After dissociation, two additional enzymatic reactions on the tRNA convert PreQ1 to queuine (Q), resulting in the hypermodified nucleoside queuosine (7-(((4,5-cis-dihydroxy-2-cyclopenten-1-yl)amino)methyl)-7-deazaguanosine). This chain is Queuine tRNA-ribosyltransferase, found in Neisseria meningitidis serogroup C / serotype 2a (strain ATCC 700532 / DSM 15464 / FAM18).